Here is a 585-residue protein sequence, read N- to C-terminus: Arginine--tRNA ligase (585 aa).

The 'HIGH' region signature appears at 131–141; sequence ANPTGPMHVGH.

This sequence belongs to the class-I aminoacyl-tRNA synthetase family. As to quaternary structure, monomer.

It is found in the cytoplasm. The catalysed reaction is tRNA(Arg) + L-arginine + ATP = L-arginyl-tRNA(Arg) + AMP + diphosphate. The protein is Arginine--tRNA ligase of Brucella canis (strain ATCC 23365 / NCTC 10854 / RM-666).